A 1354-amino-acid polypeptide reads, in one-letter code: MAAAALCCASRKSNKYNNEAGYEVYTISEDQLRLKQKMKDRKEGVQVEYITSRLIVLSCTSETSERKFVESLLKASQQIQNAHNKHIRVWNVSQRRHDISSSLDAIPFGWPSETAPSLEKLCTICKNLDQWMLEHPLNIAVIFCKGGLERCAIVVNAFMRFNAISATDDSVDDRFSMQRFSERFLGPDGPPSYKRYLGYFSSLLSGRISVNSDPLYLHNIILTFFEPINVFLKIYERLVPVYQSKTVALNKSSKFEMDGSLKLRGDIFFKCIVAASSPGSSTRCLFTCQLNTCALELHPINSEGYSVVRLHKEELDLIFNDKKIDNRVTVELVVSHTSGPTTIATAAVQSVHSLLPRNNSYETFELAQDDETNRSRLEVEYSEIRKKSTKSSKSANPINNNQEEEMPVGPPVPPKPSTPIMNGERLGEYGVGGHIGNGDVVPERRGILPASLREKINQKKELEGRATPSIEPDLVGRDRYDKASRCFSYVPAKSMQEAFERPRRTSFSRAIEKRENSVENVSQEEVARTEIPQSYQQNDISTPAKWDEQVEDAKQSALLEELARAPSAMQHNYWGNGEVDNVQVVDQAQRAVITPTSTLQRRPKPPARSGSYRTLNDDAYCSDMDELCDPEYYLNYNSNTAPLPPPRRQEQHAGTRSVQLPRKKMNFDAVTDPLDDVLESTKRLGSAYSVGDVRGGQQQQQEQHNASNDFNFSNTLNNTPTDYRQHYRNRNCQSVTTPRNHHFSTPSREQEADAADTWLSGKLKKVRSKRDIDPDIVRRRTQEKMLLEELKDSAANNDENQHNLPNGHARGAGLQNIDPLAEFRREEERLRNTRSPYGEERWRGRMRGKPPTPPPRESSASPVNSLPRGTPAHHMDRQRHNQSVPLPMHHRQFDEDFDVNSLFNFSHDPRQQSTTLERGGRSLSRGARIQDAYYASQQDLSANNRFNSGQERVAAAIYRAETAHRDMYASGTINRAETPGRYFPENSAVLERSSTPSFPVSRATPLPFHPLLYNNGERGGSGHAAGGGGGGHNGYSTMNNRSASPRLFGGSSTLSRRSSVNSVDTSEIIHHHPLFVKDTSKYWYKPTISREQAINMLRDKPPGTFVVRDSNSFPGAFGLALKVSTPPPGVNPGDGSELVRHFLIEPSPKGVKLKGCNNEPVFGSLSALVYQHSITALALPTKLVLPDFDPAATPEHLSATQALLEQGAACNVVYVGSVDVESLTGNECVKRSIATCSQRAINGDSRAVSVHFKVSSQGVTLTDNTRKVFFRRHFNVQSVIFAGMDPIERRFENTRALGFHDGCIAQARLFAFVARIPSSSENACHVFAELEPEQPGSAVVNFINKVMLAQKNRS.

Residues 38–207 (MKDRKEGVQV…GYFSSLLSGR (170 aa)) enclose the Phosphatase tensin-type domain. Residue Cys-144 is the Phosphocysteine intermediate of the active site. One can recognise a C2 tensin-type domain in the interval 212 to 337 (SDPLYLHNII…VTVELVVSHT (126 aa)). 7 disordered regions span residues 380–442 (EYSE…DVVP), 597–616 (STLQ…RTLN), 638–660 (SNTA…SVQL), 692–720 (DVRG…NNTP), 734–754 (SVTT…EADA), 794–879 (AANN…DRQR), and 1015–1035 (NGER…HNGY). Positions 391–401 (SSKSANPINNN) are enriched in polar residues. Residues 408 to 417 (VGPPVPPKPS) show a composition bias toward pro residues. Polar residues-rich tracts occupy residues 704 to 720 (HNAS…NNTP), 734 to 747 (SVTT…STPS), and 794 to 804 (AANNDENQHNL). Positions 821–843 (AEFRREEERLRNTRSPYGEERWR) are enriched in basic and acidic residues. Residues 1017 to 1033 (ERGGSGHAAGGGGGGHN) show a composition bias toward gly residues. In terms of domain architecture, SH2 spans 1083 to 1187 (WYKPTISREQ…ALPTKLVLPD (105 aa)). The PTB domain occupies 1209-1353 (ACNVVYVGSV…NKVMLAQKNR (145 aa)).

The protein belongs to the PTEN phosphatase protein family. In terms of assembly, may interact (via SH2 domain) with receptor svh-2 (when tyrosine-phosphorylated). May interact (via C-terminus) with integrin pat-3. In terms of tissue distribution, expressed in ventral motor neurons, including ventral and dorsal D-type neurons, and in a subset of cells in the head.

It localises to the cell projection. The protein resides in the axon. It catalyses the reaction O-phospho-L-tyrosyl-[protein] + H2O = L-tyrosyl-[protein] + phosphate. Functionally, probable phosphatase which regulates axon regeneration after injury by linking the svh-2 and integrin signaling pathways. In terms of biological role, not involved in axon regeneration after injury. The chain is Tensin homolog from Caenorhabditis elegans.